A 71-amino-acid chain; its full sequence is Beta-defensin 25 (71 aa).

An N-terminal signal peptide occupies residues 1–22 (MAKWILLIVALLVLSHVPPGST). 3 disulfide bridges follow: Cys27–Cys54, Cys34–Cys48, and Cys38–Cys55.

This sequence belongs to the beta-defensin family.

The protein localises to the secreted. Its function is as follows. Has antibacterial activity. This chain is Beta-defensin 25 (Defb25), found in Mus musculus (Mouse).